Here is a 554-residue protein sequence, read N- to C-terminus: Eukaryotic translation initiation factor 3 subunit D-2 (554 aa).

The segment at 116-149 (RGNAAIGGGQGGAGGTGGAGVGNKYGKGRDMRRG) is disordered. Over residues 120–140 (AIGGGQGGAGGTGGAGVGNKY) the composition is skewed to gly residues. The segment at 291 to 305 (QFDLLTVNETALEPP) is RNA gate. The segment at 532–554 (FDSDGNDDEETSDDRPFLKSLGN) is disordered.

The protein belongs to the eIF-3 subunit D family. Component of the eukaryotic translation initiation factor 3 (eIF-3) complex. The eIF-3 complex interacts with pix.

It is found in the cytoplasm. MRNA cap-binding component of the eukaryotic translation initiation factor 3 (eIF-3) complex, which is involved in protein synthesis of a specialized repertoire of mRNAs and, together with other initiation factors, stimulates binding of mRNA and methionyl-tRNAi to the 40S ribosome. The eIF-3 complex specifically targets and initiates translation of a subset of mRNAs involved in cell proliferation. In the eIF-3 complex, eif3d specifically recognizes and binds the 7-methylguanosine cap of a subset of mRNAs. The protein is Eukaryotic translation initiation factor 3 subunit D-2 of Drosophila virilis (Fruit fly).